A 115-amino-acid polypeptide reads, in one-letter code: Aspartate 1-decarboxylase (115 aa).

Serine 25 serves as the catalytic Schiff-base intermediate with substrate; via pyruvic acid. Serine 25 bears the Pyruvic acid (Ser) mark. Substrate is bound at residue threonine 57. Catalysis depends on tyrosine 58, which acts as the Proton donor. 71 to 73 lines the substrate pocket; the sequence is GAA.

The protein belongs to the PanD family. In terms of assembly, heterooctamer of four alpha and four beta subunits. It depends on pyruvate as a cofactor. Post-translationally, is synthesized initially as an inactive proenzyme, which is activated by self-cleavage at a specific serine bond to produce a beta-subunit with a hydroxyl group at its C-terminus and an alpha-subunit with a pyruvoyl group at its N-terminus.

It is found in the cytoplasm. It carries out the reaction L-aspartate + H(+) = beta-alanine + CO2. The protein operates within cofactor biosynthesis; (R)-pantothenate biosynthesis; beta-alanine from L-aspartate: step 1/1. Functionally, catalyzes the pyruvoyl-dependent decarboxylation of aspartate to produce beta-alanine. The protein is Aspartate 1-decarboxylase of Campylobacter curvus (strain 525.92).